Here is a 517-residue protein sequence, read N- to C-terminus: Bifunctional purine biosynthesis protein PurH (517 aa).

Residues 1-146 (MGRLVLLSVS…KNFAHLTVLC (146 aa)) enclose the MGS-like domain.

It belongs to the PurH family.

It catalyses the reaction (6R)-10-formyltetrahydrofolate + 5-amino-1-(5-phospho-beta-D-ribosyl)imidazole-4-carboxamide = 5-formamido-1-(5-phospho-D-ribosyl)imidazole-4-carboxamide + (6S)-5,6,7,8-tetrahydrofolate. The enzyme catalyses IMP + H2O = 5-formamido-1-(5-phospho-D-ribosyl)imidazole-4-carboxamide. It functions in the pathway purine metabolism; IMP biosynthesis via de novo pathway; 5-formamido-1-(5-phospho-D-ribosyl)imidazole-4-carboxamide from 5-amino-1-(5-phospho-D-ribosyl)imidazole-4-carboxamide (10-formyl THF route): step 1/1. It participates in purine metabolism; IMP biosynthesis via de novo pathway; IMP from 5-formamido-1-(5-phospho-D-ribosyl)imidazole-4-carboxamide: step 1/1. The protein is Bifunctional purine biosynthesis protein PurH of Gloeothece citriformis (strain PCC 7424) (Cyanothece sp. (strain PCC 7424)).